A 60-amino-acid chain; its full sequence is Large ribosomal subunit protein uL30 (60 aa).

Belongs to the universal ribosomal protein uL30 family. Part of the 50S ribosomal subunit.

The chain is Large ribosomal subunit protein uL30 from Burkholderia ambifaria (strain MC40-6).